Here is a 256-residue protein sequence, read N- to C-terminus: MNDPRKGADAEPTTHFGYQNVPESQKAKKVAEVFHSVAAKYDLMNDLMSGGIHRLWKRFTIELSGVRSGNRVLDIAGGTGDLTRQFSRLVGPSGEVVLADINASMLKVGRDKLLDKGVSGNVSFVQADAEKLPFPDNHFDCVTIAFGLRNVTHKDEAIRSMLRVLKPGGRLLVLEFSKPSSSLLSKAYDAYSFSLLPLMGKLVTNDAESYRYLAESIRMHPDQETLKAMMVEAGFDRVTYHNMTGGIVALHRGIKP.

S-adenosyl-L-methionine-binding positions include threonine 79, aspartate 100, and 128–129 (DA).

Belongs to the class I-like SAM-binding methyltransferase superfamily. MenG/UbiE family.

It carries out the reaction a 2-demethylmenaquinol + S-adenosyl-L-methionine = a menaquinol + S-adenosyl-L-homocysteine + H(+). The catalysed reaction is a 2-methoxy-6-(all-trans-polyprenyl)benzene-1,4-diol + S-adenosyl-L-methionine = a 5-methoxy-2-methyl-3-(all-trans-polyprenyl)benzene-1,4-diol + S-adenosyl-L-homocysteine + H(+). The protein operates within quinol/quinone metabolism; menaquinone biosynthesis; menaquinol from 1,4-dihydroxy-2-naphthoate: step 2/2. It participates in cofactor biosynthesis; ubiquinone biosynthesis. In terms of biological role, methyltransferase required for the conversion of demethylmenaquinol (DMKH2) to menaquinol (MKH2) and the conversion of 2-polyprenyl-6-methoxy-1,4-benzoquinol (DDMQH2) to 2-polyprenyl-3-methyl-6-methoxy-1,4-benzoquinol (DMQH2). This chain is Ubiquinone/menaquinone biosynthesis C-methyltransferase UbiE, found in Pseudomonas paraeruginosa (strain DSM 24068 / PA7) (Pseudomonas aeruginosa (strain PA7)).